Here is a 337-residue protein sequence, read N- to C-terminus: Adenosine deaminase-like protein (337 aa).

Zn(2+)-binding residues include histidine 14 and histidine 16. N(6)-methyl-AMP is bound by residues histidine 16, asparagine 18, histidine 66, 98 to 101, and glycine 171; that span reads TTPK. Zn(2+) is bound at residue histidine 198. 3 residues coordinate N(6)-methyl-AMP: glutamate 201, aspartate 276, and aspartate 277. The active-site Proton donor is glutamate 201. Aspartate 276 provides a ligand contact to Zn(2+).

The protein belongs to the metallo-dependent hydrolases superfamily. Adenosine and AMP deaminases family. As to quaternary structure, monomer. Zn(2+) serves as cofactor.

The enzyme catalyses N(6)-methyl-AMP + H2O + H(+) = IMP + methylamine. Its function is as follows. Catalyzes the hydrolysis of the free cytosolic methylated adenosine nucleotide N(6)-methyl-AMP (N6-mAMP) to produce inositol monophosphate (IMP) and methylamine. Is required for the catabolism of cytosolic N6-mAMP, which is derived from the degradation of mRNA containing N6-methylated adenine (m6A). This is Adenosine deaminase-like protein (Ada) from Drosophila melanogaster (Fruit fly).